Here is a 1382-residue protein sequence, read N- to C-terminus: Hepatocyte growth factor receptor (1382 aa).

The N-terminal stretch at 1–24 (MKAPAVLAPGILVLLFTLVPRSHG) is a signal peptide. At 25-933 (ECKEALVKSE…VIVQPDQNFM (909 aa)) the chain is on the extracellular side. Residues 27 to 516 (KEALVKSEMN…TGNKITKIPL (490 aa)) enclose the Sema domain. The N-linked (GlcNAc...) asparagine glycan is linked to Asn-45. 4 disulfides stabilise this stretch: Cys-95–Cys-101, Cys-98–Cys-160, Cys-133–Cys-141, and Cys-173–Cys-176. Asn-106 carries N-linked (GlcNAc...) asparagine glycosylation. Asn-203 and Asn-359 each carry an N-linked (GlcNAc...) asparagine glycan. 2 disulfides stabilise this stretch: Cys-299-Cys-364 and Cys-386-Cys-398. Residues Asn-400 and Asn-406 are each glycosylated (N-linked (GlcNAc...) asparagine). Disulfide bonds link Cys-521–Cys-539, Cys-527–Cys-562, Cys-530–Cys-546, and Cys-542–Cys-552. IPT/TIG domains lie at 564-656 (PAIY…FSYV), 658-740 (PVIT…FSYR), and 743-837 (PIVD…LTYV). O-linked (Man) threonine glycosylation is present at Thr-583. 3 N-linked (GlcNAc...) asparagine glycosylation sites follow: Asn-608, Asn-614, and Asn-636. Thr-677 and Thr-762 each carry an O-linked (Man) threonine glycan. N-linked (GlcNAc...) asparagine glycosylation is found at Asn-786 and Asn-880. A helical transmembrane segment spans residues 934–956 (GLIVGGVSISIILLLLLGLFLWL). Over 957–1382 (KKKKRIKDLG…QDNVDGTVDT (426 aa)) the chain is Cytoplasmic. The residue at position 967 (Ser-967) is a Phosphoserine. A Phosphothreonine modification is found at Thr-978. 3 positions are modified to phosphoserine: Ser-991, Ser-998, and Ser-1001. The residue at position 1004 (Tyr-1004) is a Phosphotyrosine. The region spanning 1079-1346 (VHFSEVIGRG…RISTIFSTFI (268 aa)) is the Protein kinase domain. Residues 1085-1093 (IGRGHFGCV) and Lys-1111 contribute to the ATP site. Catalysis depends on Asp-1205, which acts as the Proton acceptor. Residues 1213–1382 (LDEKFTVKVA…QDNVDGTVDT (170 aa)) form an interaction with RANBP9 region. At Tyr-1231 the chain carries Phosphotyrosine. A phosphotyrosine; by autocatalysis mark is found at Tyr-1235 and Tyr-1236. A Phosphothreonine modification is found at Thr-1290. Positions 1321–1360 (WHPKAEMRPSFSELVSRISTIFSTFIGEHYVHVNATYVNV) are interaction with MUC20. Tyr-1350 and Tyr-1357 each carry phosphotyrosine; by autocatalysis. At Tyr-1366 the chain carries Phosphotyrosine.

It belongs to the protein kinase superfamily. Tyr protein kinase family. Heterodimer made of an alpha chain (50 kDa) and a beta chain (145 kDa) which are disulfide linked. Binds PLXNB1. Interacts when phosphorylated with downstream effectors including STAT3, PIK3R1, SRC, PCLG1, GRB2 and GAB1. Interacts with SPSB1, SPSB2 and SPSB4. Interacts with INPP5D/SHIP1. When phosphorylated at Tyr-1357, interacts with INPPL1/SHIP2. Interacts with RANBP9 and RANBP10, as well as SPSB1, SPSB2, SPSB3 and SPSB4. SPSB1 binding occurs in the presence and in the absence of HGF, however HGF treatment has a positive effect on this interaction. Interacts with MUC20; prevents interaction with GRB2 and suppresses hepatocyte growth factor-induced cell proliferation. Interacts with GRB10. Interacts with PTPN1 and PTPN2. Interacts with HSP90AA1 and HSP90AB1; the interaction suppresses MET kinase activity. Interacts with tensin TNS3. Interacts (when phosphorylated) with tensin TNS4 (via SH2 domain); the interaction increases MET protein stability by inhibiting MET endocytosis and subsequent lysosomal degradation. Post-translationally, autophosphorylated in response to ligand binding on Tyr-1235 and Tyr-1236 in the kinase domain leading to further phosphorylation of Tyr-1350 and Tyr-1357 in the C-terminal multifunctional docking site. Dephosphorylated by PTPRJ at Tyr-1350 and Tyr-1366. Dephosphorylated by PTPN1 and PTPN2. Ubiquitinated. Ubiquitination by CBL regulates the receptor stability and activity through proteasomal degradation. In terms of processing, O-mannosylation of IPT/TIG domains by TMEM260 is required for protein maturation. O-mannosylated residues are composed of single mannose glycans that are not elongated or modified.

Its subcellular location is the membrane. It carries out the reaction L-tyrosyl-[protein] + ATP = O-phospho-L-tyrosyl-[protein] + ADP + H(+). With respect to regulation, in its inactive state, the C-terminal tail interacts with the catalytic domain and inhibits the kinase activity. Upon ligand binding, the C-terminal tail is displaced and becomes phosphorylated, thus increasing the kinase activity. Functionally, receptor tyrosine kinase that transduces signals from the extracellular matrix into the cytoplasm by binding to hepatocyte growth factor/HGF ligand. Regulates many physiological processes including proliferation, scattering, morphogenesis and survival. Ligand binding at the cell surface induces autophosphorylation of MET on its intracellular domain that provides docking sites for downstream signaling molecules. Following activation by ligand, interacts with the PI3-kinase subunit PIK3R1, PLCG1, SRC, GRB2, STAT3 or the adapter GAB1. Recruitment of these downstream effectors by MET leads to the activation of several signaling cascades including the RAS-ERK, PI3 kinase-AKT, or PLCgamma-PKC. The RAS-ERK activation is associated with the morphogenetic effects while PI3K/AKT coordinates prosurvival effects. During embryonic development, MET signaling plays a role in gastrulation, development and migration of muscles and neuronal precursors, angiogenesis and kidney formation. In adults, participates in wound healing as well as organ regeneration and tissue remodeling. Also promotes differentiation and proliferation of hematopoietic cells. This chain is Hepatocyte growth factor receptor (MET), found in Oryctolagus cuniculus (Rabbit).